A 286-amino-acid chain; its full sequence is Putative L-ribulose-5-phosphate 3-epimerase SgbU (286 aa).

It belongs to the L-ribulose-5-phosphate 3-epimerase family.

The catalysed reaction is L-ribulose 5-phosphate = L-xylulose 5-phosphate. Functionally, catalyzes the isomerization of L-xylulose-5-phosphate to L-ribulose-5-phosphate. The protein is Putative L-ribulose-5-phosphate 3-epimerase SgbU (sgbU) of Haemophilus influenzae (strain ATCC 51907 / DSM 11121 / KW20 / Rd).